Reading from the N-terminus, the 153-residue chain is UPAR/Ly6 domain-containing protein cold (153 aa).

The first 25 residues, 1 to 25, serve as a signal peptide directing secretion; it reads MKSWEIAVVLVAAVYLCSQVNFVAG. Residues 26 to 130 are Extracellular-facing; it reads LECYVCSNQT…FVISGAPSRQ (105 aa). Intrachain disulfides connect Cys-28–Cys-55, Cys-31–Cys-41, Cys-48–Cys-81, Cys-87–Cys-112, Cys-99–Cys-109, and Cys-113–Cys-118. An N-linked (GlcNAc...) asparagine glycan is attached at Asn-33. Ser-124 carries the GPI-anchor amidated serine lipid modification. Positions 125–153 are cleaved as a propeptide — removed in mature form; that stretch reads GAPSRQGYGVCLTLLTALLGLGSWLIPRS. A helical membrane pass occupies residues 131–151; sequence GYGVCLTLLTALLGLGSWLIP. Topologically, residues 152–153 are cytoplasmic; it reads RS.

Belongs to the snake toxin-like superfamily. Post-translationally, GPI-anchored. Expressed in all tissues that form septate junctions, including hindgut, trachea, epidermis and dorsal pouch. Expressed in subperineurial glial cells that form the hemolymph-brain barrier of the central nervous system.

The protein localises to the endosome membrane. It localises to the endoplasmic reticulum membrane. The protein resides in the cell membrane. Its subcellular location is the cell junction. It is found in the septate junction. Its function is as follows. Required for septate junction assembly, possibly by organizing the preassembly and transport of septate junction proteins such as dlg1/disks large 1 and Nrx-IV/Neurexin-IV. Involved in paracellular barrier functions of trachea, hindgut and salivary gland mediated by epithelial cell septate junctions. Involved in paracellular barrier functions of the hemolymph-brain barrier (insect blood-brain barrier) mediated by glial cell septate junctions. Required for maintenance of septate junctions in imaginal disk epithelial cells. Involved in the epithelial cell wound-healing response. Directly or indirectly mediates cell-cell adhesion during septate junction formation. The chain is UPAR/Ly6 domain-containing protein cold from Drosophila melanogaster (Fruit fly).